We begin with the raw amino-acid sequence, 124 residues long: MRPHHFFCGNMGVMYTAMSGYETEDAQAYWACGRAYESAFATLTKKVPGTTFSADMPTSTWHGVLDCGYSSSINVAENKSSPIDYWNCGRTYARNYALSDALSLKPTNMLQYFLLVLFFICIIL.

This is an uncharacterized protein from Saccharomyces cerevisiae (strain ATCC 204508 / S288c) (Baker's yeast).